Reading from the N-terminus, the 552-residue chain is Chaperonin GroEL (552 aa).

ATP-binding positions include 30–33 (TLGP), lysine 51, 87–91 (DGTTT), glycine 415, and aspartate 496.

This sequence belongs to the chaperonin (HSP60) family. Forms a cylinder of 14 subunits composed of two heptameric rings stacked back-to-back. Interacts with the co-chaperonin GroES.

The protein localises to the cytoplasm. The catalysed reaction is ATP + H2O + a folded polypeptide = ADP + phosphate + an unfolded polypeptide.. Its function is as follows. Together with its co-chaperonin GroES, plays an essential role in assisting protein folding. The GroEL-GroES system forms a nano-cage that allows encapsulation of the non-native substrate proteins and provides a physical environment optimized to promote and accelerate protein folding. The chain is Chaperonin GroEL from Paramagnetospirillum magneticum (strain ATCC 700264 / AMB-1) (Magnetospirillum magneticum).